The following is a 347-amino-acid chain: S-adenosylmethionine:tRNA ribosyltransferase-isomerase (347 aa).

It belongs to the QueA family. As to quaternary structure, monomer.

It is found in the cytoplasm. The catalysed reaction is 7-aminomethyl-7-carbaguanosine(34) in tRNA + S-adenosyl-L-methionine = epoxyqueuosine(34) in tRNA + adenine + L-methionine + 2 H(+). The protein operates within tRNA modification; tRNA-queuosine biosynthesis. Functionally, transfers and isomerizes the ribose moiety from AdoMet to the 7-aminomethyl group of 7-deazaguanine (preQ1-tRNA) to give epoxyqueuosine (oQ-tRNA). The protein is S-adenosylmethionine:tRNA ribosyltransferase-isomerase of Halalkalibacterium halodurans (strain ATCC BAA-125 / DSM 18197 / FERM 7344 / JCM 9153 / C-125) (Bacillus halodurans).